The following is a 929-amino-acid chain: Isoleucine--tRNA ligase (929 aa).

The short motif at 58–68 is the 'HIGH' region element; the sequence is PYANGDIHIGH. Residue E563 participates in L-isoleucyl-5'-AMP binding. Positions 605–609 match the 'KMSKS' region motif; the sequence is KMSKS. K608 provides a ligand contact to ATP. C892, C895, C912, and C915 together coordinate Zn(2+).

Belongs to the class-I aminoacyl-tRNA synthetase family. IleS type 1 subfamily. As to quaternary structure, monomer. The cofactor is Zn(2+).

The protein localises to the cytoplasm. It carries out the reaction tRNA(Ile) + L-isoleucine + ATP = L-isoleucyl-tRNA(Ile) + AMP + diphosphate. Functionally, catalyzes the attachment of isoleucine to tRNA(Ile). As IleRS can inadvertently accommodate and process structurally similar amino acids such as valine, to avoid such errors it has two additional distinct tRNA(Ile)-dependent editing activities. One activity is designated as 'pretransfer' editing and involves the hydrolysis of activated Val-AMP. The other activity is designated 'posttransfer' editing and involves deacylation of mischarged Val-tRNA(Ile). In Neisseria gonorrhoeae (strain ATCC 700825 / FA 1090), this protein is Isoleucine--tRNA ligase.